Reading from the N-terminus, the 155-residue chain is Vasotocin-neurophysin VT 1 (155 aa).

Positions 1–20 (MPDSTIPLLCVLGLLALSSA) are cleaved as a signal peptide. Cysteine 21 and cysteine 26 are oxidised to a cystine. Glycine 29 carries the post-translational modification Glycine amide. Cystine bridges form between cysteine 41/cysteine 85, cysteine 44/cysteine 58, cysteine 52/cysteine 75, cysteine 59/cysteine 65, cysteine 92/cysteine 105, cysteine 99/cysteine 117, and cysteine 106/cysteine 111.

It belongs to the vasopressin/oxytocin family. In terms of processing, seven disulfide bonds are present in neurophysin.

It is found in the secreted. Vasotocin is probably an antidiuretic hormone. This Oncorhynchus masou (Cherry salmon) protein is Vasotocin-neurophysin VT 1.